Here is a 266-residue protein sequence, read N- to C-terminus: Interleukin-33 (266 aa).

The homeodomain-like HTH domain stretch occupies residues 1–67 (MRPRMKYSNS…ETSYFRKEPT (67 aa)). Positions 1–101 (MRPRMKYSNS…RSLLGSIQAF (101 aa)) are excised as a propeptide. Residues 66–108 (PTKRYSLKSGTKHEENFSAYPRDSRKRSLLGSIQAFAASVDTL) are interaction with RELA.

The protein belongs to the IL-1 family. Highly divergent. (Microbial infection) Interacts (in reduced form) with H.polygyrus ARI; the interaction abolishes the interaction with its primary receptor IL1RL1. In terms of assembly, forms a 1:1:1 heterotrimeric complex with its primary high-affinity receptor IL1RL1 and the coreceptor IL1RAP. Interacts with cargo receptor TMED10; the interaction mediates the translocation from the cytoplasm into the ERGIC (endoplasmic reticulum-Golgi intermediate compartment) and thereby secretion. The full-length protein can be released from cells and is able to signal via the IL1RL1/ST2 receptor. However, proteolytic processing by CELA1, CSTG/cathepsin G and ELANE/neutrophil elastase produces C-terminal peptides that are more active than the unprocessed full-length protein. May also be proteolytically processed by calpains. Proteolytic cleavage mediated by apoptotic caspases including CASP3 and CASP7 results in IL33 inactivation. In vitro proteolytic cleavage by CASP1 was reported but could not be confirmed in vivo suggesting that IL33 is probably not a direct substrate for that caspase.

The protein resides in the nucleus. It localises to the chromosome. The protein localises to the cytoplasm. It is found in the cytoplasmic vesicle. Its subcellular location is the secretory vesicle. The protein resides in the secreted. Functionally, cytokine that binds to and signals through the IL1RL1/ST2 receptor which in turn activates NF-kappa-B and MAPK signaling pathways in target cells. Involved in the maturation of Th2 cells inducing the secretion of T-helper type 2-associated cytokines. Also involved in activation of mast cells, basophils, eosinophils and natural killer cells. Acts as an enhancer of polarization of alternatively activated macrophages. Acts as a chemoattractant for Th2 cells, and may function as an 'alarmin', that amplifies immune responses during tissue injury. Induces rapid UCP2-dependent mitochondrial rewiring that attenuates the generation of reactive oxygen species and preserves the integrity of Krebs cycle required for persistent production of itaconate and subsequent GATA3-dependent differentiation of inflammation-resolving alternatively activated macrophages. Its function is as follows. In quiescent endothelia the uncleaved form is constitutively and abundantly expressed, and acts as a chromatin-associated nuclear factor with transcriptional repressor properties, it may sequester nuclear NF-kappaB/RELA, lowering expression of its targets. This form is rapidely lost upon angiogenic or pro-inflammatory activation. This Mus musculus (Mouse) protein is Interleukin-33.